A 374-amino-acid chain; its full sequence is Chaperone protein DnaJ (374 aa).

In terms of domain architecture, J spans 5 to 71; that stretch reads DLYAILGVCR…QKRASYDRFG (67 aa). The CR-type zinc finger occupies 132-210; that stretch reads GVEKQIRIAT…CQGTGRVKDT (79 aa). Positions 145, 148, 162, 165, 184, 187, 198, and 201 each coordinate Zn(2+). CXXCXGXG motif repeat units follow at residues 145–152, 162–169, 184–191, and 198–205; these read CGECHGSG, CPTCNGAG, CPTCHGRG, and CNKCQGTG.

The protein belongs to the DnaJ family. In terms of assembly, homodimer. The cofactor is Zn(2+).

It localises to the cytoplasm. Participates actively in the response to hyperosmotic and heat shock by preventing the aggregation of stress-denatured proteins and by disaggregating proteins, also in an autonomous, DnaK-independent fashion. Unfolded proteins bind initially to DnaJ; upon interaction with the DnaJ-bound protein, DnaK hydrolyzes its bound ATP, resulting in the formation of a stable complex. GrpE releases ADP from DnaK; ATP binding to DnaK triggers the release of the substrate protein, thus completing the reaction cycle. Several rounds of ATP-dependent interactions between DnaJ, DnaK and GrpE are required for fully efficient folding. Also involved, together with DnaK and GrpE, in the DNA replication of plasmids through activation of initiation proteins. The sequence is that of Chaperone protein DnaJ from Dichelobacter nodosus (strain VCS1703A).